A 383-amino-acid chain; its full sequence is Outer membrane protein Omp-EA (383 aa).

The first 21 residues, 1 to 21, serve as a signal peptide directing secretion; sequence MKRNILAVLIPALLAAGAANA. Residues 22–30 are Periplasmic-facing; the sequence is AEIYNKDGN. A beta stranded transmembrane segment spans residues 31 to 45; that stretch reads KLDLYGKVKAMRYLS. Residues 46–58 are Extracellular-facing; that stretch reads DADSNASNNADKS. A beta stranded membrane pass occupies residues 59 to 70; the sequence is YTRIGFKGQTLI. At 71–74 the chain is on the periplasmic side; it reads NDQL. Residues 75–86 form a beta stranded membrane-spanning segment; the sequence is TGYGQWEYNFSL. The Extracellular segment spans residues 87 to 100; sequence SNSESSSDAQSGNK. The chain crosses the membrane as a beta stranded span at residues 101–109; sequence TRLGFAGLK. Over 110-112 the chain is Periplasmic; that stretch reads LKD. Residues 113-122 form a beta stranded membrane-spanning segment; sequence YGSVDYGRNY. At 123–155 the chain is on the extracellular side; the sequence is GVIYDVEAFTDMMPEFGATGYTRTDTYMLTRGN. The beta stranded transmembrane segment at 156 to 164 threads the bilayer; the sequence is SMLTWRNSD. At 165–171 the chain is on the periplasmic side; sequence FFGLVDG. The chain crosses the membrane as a beta stranded span at residues 172–178; that stretch reads LKIALQY. Residues 179–198 are Extracellular-facing; the sequence is QGKNEGSGTRATNVSNGDGY. Residues 199-206 traverse the membrane as a beta stranded segment; sequence GASLSYKI. The Periplasmic segment spans residues 207 to 209; the sequence is VEG. A beta stranded transmembrane segment spans residues 210–219; it reads LTINGAMSSS. Topologically, residues 220-243 are extracellular; the sequence is NRLNANSASSTTSQKMAAYGSGGR. Residues 244–252 form a beta stranded membrane-spanning segment; sequence AEAWATGLK. The Periplasmic segment spans residues 253–258; it reads YDANGV. The beta stranded transmembrane segment at 259–268 threads the bilayer; the sequence is YLAGTYAETR. Residues 269 to 296 lie on the Extracellular side of the membrane; sequence NTNPFSGASYTFAGNSTATAVSGYANKV. A beta stranded transmembrane segment spans residues 297 to 307; sequence QNTELVAQYQF. Residues 308–310 are Periplasmic-facing; sequence DSG. The beta stranded transmembrane segment at 311 to 319 threads the bilayer; that stretch reads LRPSLAYVQ. Residues 320–335 are Extracellular-facing; the sequence is TKAKDIENGIGDADLS. A beta stranded transmembrane segment spans residues 336–346; the sequence is KFVDVAATYYF. Over 347–351 the chain is Periplasmic; the sequence is NKNMS. Residues 352–361 traverse the membrane as a beta stranded segment; sequence AFVDYKVNLL. The Extracellular portion of the chain corresponds to 362–372; it reads SDSNKLHLNTD. A beta stranded membrane pass occupies residues 373–383; it reads DIVAVGLVYQF.

The protein belongs to the Gram-negative porin family. Homotrimer.

The protein localises to the cell outer membrane. Its function is as follows. May play an important role in maintaining pathogenicity in plants. The chain is Outer membrane protein Omp-EA (omp-EA) from Erwinia amylovora (Fire blight bacteria).